The chain runs to 486 residues: Zinc metalloproteinase-disintegrin VMP-II (486 aa).

Residues 1–20 (MIQVLLVTICLAVFPYQGSS) form the signal peptide. Residues 21–190 (IILESGNVND…KASQSNLPPE (170 aa)) constitute a propeptide that is removed on maturation. Residue Q191 is modified to Pyrrolidone carboxylic acid. One can recognise a Peptidase M12B domain in the interval 197–394 (RYIELVVVAD…HYTTCLYNEP (198 aa)). 2 residues coordinate Ca(2+): E200 and D284. Cystine bridges form between C308–C389, C348–C372, and C350–C355. Position 333 (H333) interacts with Zn(2+). The active site involves E334. Zn(2+) is bound by residues H337 and H343. Residues C389 and N392 each contribute to the Ca(2+) site. Positions 402–486 (PPVCGNYYTE…AECPNKGYYG (85 aa)) constitute a Disintegrin domain. Intrachain disulfides connect C405–C424, C416–C434, C418–C429, C428–C451, C442–C448, C447–C472, and C460–C479. The Cell attachment site signature appears at 464-466 (RGD).

It belongs to the venom metalloproteinase (M12B) family. P-II subfamily. P-IIb sub-subfamily. Monomer. Zn(2+) is required as a cofactor. Expressed by the venom gland.

It localises to the secreted. Its function is as follows. Snake venom zinc metalloproteinase that inhibits ADP-induced platelet aggregation (probably by binding integrin alpha-IIb/beta-3 (ITGA2B/ITGB3)) and degrades fibrinogen. In Crotalus atrox (Western diamondback rattlesnake), this protein is Zinc metalloproteinase-disintegrin VMP-II.